The chain runs to 372 residues: Glutamate 5-kinase (372 aa).

Lys14 contributes to the ATP binding site. Residues Ser54, Asp141, and Asn153 each coordinate substrate. 173–174 (TD) lines the ATP pocket. One can recognise a PUA domain in the interval 280-358 (RGTLVLDAGA…DAIESLLGYS (79 aa)).

This sequence belongs to the glutamate 5-kinase family.

Its subcellular location is the cytoplasm. The enzyme catalyses L-glutamate + ATP = L-glutamyl 5-phosphate + ADP. It functions in the pathway amino-acid biosynthesis; L-proline biosynthesis; L-glutamate 5-semialdehyde from L-glutamate: step 1/2. In terms of biological role, catalyzes the transfer of a phosphate group to glutamate to form L-glutamate 5-phosphate. The sequence is that of Glutamate 5-kinase from Pseudomonas putida (strain W619).